A 98-amino-acid polypeptide reads, in one-letter code: NADH-ubiquinone oxidoreductase chain 4L (98 aa).

3 helical membrane passes run 1–21, 27–47, and 61–81; these read MTLTYMNIMLAFAISLLGMLT, VASLLCLEGMMMSLFIMATLI, and IILLVFAACETAVGLALLISI.

This sequence belongs to the complex I subunit 4L family. Core subunit of respiratory chain NADH dehydrogenase (Complex I) which is composed of 45 different subunits.

The protein resides in the mitochondrion inner membrane. It catalyses the reaction a ubiquinone + NADH + 5 H(+)(in) = a ubiquinol + NAD(+) + 4 H(+)(out). Its function is as follows. Core subunit of the mitochondrial membrane respiratory chain NADH dehydrogenase (Complex I) which catalyzes electron transfer from NADH through the respiratory chain, using ubiquinone as an electron acceptor. Part of the enzyme membrane arm which is embedded in the lipid bilayer and involved in proton translocation. The protein is NADH-ubiquinone oxidoreductase chain 4L (MT-ND4L) of Macaca mulatta (Rhesus macaque).